Reading from the N-terminus, the 248-residue chain is Probable transcriptional regulatory protein Desal_2886 (248 aa).

The segment at 1 to 21 (MAGHSKWANIQHRKGRQDAKR) is disordered.

The protein belongs to the TACO1 family.

The protein localises to the cytoplasm. The chain is Probable transcriptional regulatory protein Desal_2886 from Maridesulfovibrio salexigens (strain ATCC 14822 / DSM 2638 / NCIMB 8403 / VKM B-1763) (Desulfovibrio salexigens).